A 449-amino-acid chain; its full sequence is Naphthalene 1,2-dioxygenase system, large oxygenase component (449 aa).

In terms of domain architecture, Rieske spans 39 to 137 (WLFLTHDSLI…LNKKCLGLKE (99 aa)). 4 residues coordinate [2Fe-2S] cluster: Cys81, His83, Cys101, and His104. The Fe cation site is built by His208, His213, and Asp362.

The protein belongs to the bacterial ring-hydroxylating dioxygenase alpha subunit family. As to quaternary structure, the naphthalene dioxygenase (NDO) multicomponent enzyme system is composed of an electron transfer component and a dioxygenase component (iron sulfur protein (ISP)). The electron transfer component is composed of a ferredoxin reductase (NdoR) and a ferredoxin (NdoA), and the dioxygenase component is formed of a heterohexamer (trimer of heterodimers) of three large alpha subunits (NdoB) and three small beta subunits (NdoC). It depends on [2Fe-2S] cluster as a cofactor. The cofactor is Fe(2+).

It carries out the reaction naphthalene + NADH + O2 + H(+) = (1R,2S)-1,2-dihydronaphthalene-1,2-diol + NAD(+). It functions in the pathway aromatic compound metabolism; naphthalene degradation. Component of the naphthalene dioxygenase (NDO) multicomponent enzyme system which catalyzes the incorporation of both atoms of molecular oxygen into naphthalene to form cis-(1R,2S)-dihydroxy-1,2-dihydronaphthalene. The alpha subunit has a catalytic role in the holoenzyme. Also able to catalyze the cis-dihydroxylation of biphenyl and phenanthrene. This is Naphthalene 1,2-dioxygenase system, large oxygenase component from Pseudomonas putida (Arthrobacter siderocapsulatus).